Consider the following 856-residue polypeptide: Putative zinc protease C28F5.4 (856 aa).

Histidine 71 provides a ligand contact to Zn(2+). The active-site Proton acceptor is glutamate 74. Zn(2+) contacts are provided by histidine 75 and glutamate 152.

It belongs to the peptidase M16 family.

This Caenorhabditis elegans protein is Putative zinc protease C28F5.4.